Here is a 260-residue protein sequence, read N- to C-terminus: 6-carboxyhexanoate--CoA ligase (260 aa).

This sequence belongs to the BioW family. As to quaternary structure, homodimer. Mg(2+) is required as a cofactor.

The catalysed reaction is heptanedioate + ATP + CoA = 6-carboxyhexanoyl-CoA + AMP + diphosphate. It functions in the pathway metabolic intermediate metabolism; pimeloyl-CoA biosynthesis; pimeloyl-CoA from pimelate: step 1/1. In terms of biological role, catalyzes the transformation of pimelate into pimeloyl-CoA with concomitant hydrolysis of ATP to AMP. This Fibrobacter succinogenes (strain ATCC 19169 / S85) protein is 6-carboxyhexanoate--CoA ligase.